Here is a 946-residue protein sequence, read N- to C-terminus: MASIDNVFSLGTRFSIPENPKRSILKHATTSSFSARTQTRWRAPILRRSFTVLCELKTGSSSSGETNNSPAADDFVTRVLKENPSQVEPRYRVGDKLYNLKEREDLSKGTNAATGAFEFIKRKFDSKKKTETDKSEESVYLSDILREYKGKLYVPEQVFGPELSEEEEFEKNVKDLPKMSLEDFRKAMENDKVKLLTSKEVSGVSYTSGYRGFIVDLKEIPGVKSLQRTKWSMKLEVGEAQALLKEYTGPQYEIERHMTSWVGKVADFPNPVASSISSRVMVELGMVTAVIAAAAVVVGGFLASAVFAVTSFAFVTTVYVVWPIAKPFLKLFVGVFLGVLEKSWDYIVDVLADGGIFSRISDFYTFGGVASSLEMLKPILLVVMTMVLLVRFTLSRRPKNFRKWDLWQGIAFSQSKAEARVDGSTGVKFADVAGIDEAVDELQELVKYLKNPDLFDKMGIKPPHGVLLEGPPGCGKTLVAKAIAGEAGVPFYQMAGSEFVEVLVGVGSARIRDLFKRAKVNKPSVIFIDEIDALATRRQGIFKENSDQLYNAATQERETTLNQLLIELDGFDTGKGVIFLGATNRRDLLDPALLRPGRFDRKIRVRPPNAKGRLDILKIHASKVKMSDSVDLSSYASNLPGWSGAKLAQLVQEAALVAVRKTHNSILQSDMDDAVDRLTVGPTRIGLELGHQGQCRRATTEVGVAITSHLLLRYENAKIERCDRVSIIPRGQTLSQVVFHRLDDESYMFGRLPQLLHRLQVLLGGRAAEEVIYGSDTSKASVDYLSDASWLARKILTIWNLENPMVIHGEPPPWRKRPQFVGPRLDFEGSLYDDYDLVEPPVNFNMDDEVAHRSEELISQMYNKTVSLLRQNQTALLKTVKVLLNQKEISGEAIDFILDHYPPQTPLNSLLQEQNPGSLPFVPEHLRRESGDFVLVNHSTDVNAQV.

A chloroplast-targeting transit peptide spans 1–54 (MASIDNVFSLGTRFSIPENPKRSILKHATTSSFSARTQTRWRAPILRRSFTVLC). The next 3 helical transmembrane spans lie at 289–309 (AVIA…VFAV), 320–340 (VVWP…LGVL), and 369–389 (VASS…MVLL). 470–477 (GPPGCGKT) provides a ligand contact to ATP.

This sequence in the N-terminal section; belongs to the AAA ATPase family. It in the C-terminal section; belongs to the peptidase M41 family. Oligomer.

Its subcellular location is the plastid. The protein localises to the chloroplast inner membrane. Its function is as follows. Functions in chloroplast biogenesis and chloroplast division. Required for plastid development during embryogenesis. Might be involved in chaperone functions or play a structural role in the thylakoid FtsH complex. This is Probable inactive ATP-dependent zinc metalloprotease FTSHI 1, chloroplastic from Arabidopsis thaliana (Mouse-ear cress).